Reading from the N-terminus, the 420-residue chain is MSNKHSACQVQFRVIVVGAGIGGLSAAVALANRGHSVLVLESTTKLSHVGAGVALPPTTRKWYESEGVLRAESGCIPLDGIELRKWDTGELVTRTAANPIGKQNAIHHGDMQQALLARAAQLDNISIRLGARVMDIDIDSNTVLLHNGEQVEGDVIIAADGVKSVIKPKICPPGASKAQSTGEAAYRFTLARDLLKDDEELLDLVQRSWATRWDGPSRHVVAYPVRNHQLLNVVLIHPDDGNTEESWTTVADKQDVIEHYQDWNLTLNKLIHLAPTQVPNFRMFLYPPSPVWVKGSTILLGDACHAMLPYLGQGVGQAADDAVAIATVLSTIEHREQLPLALQAYEVSRKSRVEQIQAATYQAREHLHLKDREAQAARDLQRKSASESNQNSDVVKMQHSYWVWDAAKVAQIALTELITG.

Residues 12–31 (FRVIVVGAGIGGLSAAVALA) form a helical membrane-spanning segment. 2 residues coordinate FAD: glutamate 41 and alanine 54. Residue asparagine 124 is glycosylated (N-linked (GlcNAc...) asparagine). Residue arginine 187 is part of the active site. Asparagine 264 is a glycosylation site (N-linked (GlcNAc...) asparagine). 2 residues coordinate FAD: aspartate 302 and valine 315.

This sequence belongs to the paxM FAD-dependent monooxygenase family. FAD is required as a cofactor.

The protein resides in the membrane. It participates in secondary metabolite biosynthesis; terpenoid biosynthesis. In terms of biological role, FAD-dependent monooxygenase; part of the gene cluster that mediates the biosynthesis of the meroterpenoids nectripenoids A and B, as well as cochliquninone D and isocochliquninone E. The pathway probably begins with the HR-PKS ntnH that catalyzes two chain-extension steps to form a reduced triketide, which then primes the SAT domain in the NR-PKS ntnG to initiate three more cycles of extension to give a linear hexaketide corresponding to the polyketide part of nectripenoids. The FAD-dependent monooxygenase ntnJ then performs an oxidative decarboxylation at C11 of the ntnH/ntnG product, via an electrophilic aromatic hydroxylation with concomitant ipso-decarboxylation. The membrane-bound polyprenyl transferase ntnF then introduces a farnesyl group before the FAD-dependent monooxygenase ntnK functions as the first epoxidase on terminal C12'-C13' olefin, followed by a second epoxidation on C7'-C8' catalyzed by ntnA. The terpene cyclase/mutase ntnI then initiates the sequential tricyclic ring formation through protonation of the terminal epoxide and catalyzes the regioselective and stereoselective 6/6/6-tricyclic ring formation. The cytochrome P450 monooxygenase ntnM may then hydroxylate C1'. In Nectria sp, this protein is FAD-dependent monooxygenase ntnJ.